A 1177-amino-acid polypeptide reads, in one-letter code: DNA-directed RNA polymerase subunit beta' (1177 aa).

Zn(2+) is bound by residues Cys60, Cys62, Cys75, and Cys78. Positions 450, 452, and 454 each coordinate Mg(2+). 4 residues coordinate Zn(2+): Cys795, Cys869, Cys876, and Cys879.

It belongs to the RNA polymerase beta' chain family. The RNAP catalytic core consists of 2 alpha, 1 beta, 1 beta' and 1 omega subunit. When a sigma factor is associated with the core the holoenzyme is formed, which can initiate transcription. Mg(2+) serves as cofactor. Zn(2+) is required as a cofactor.

The enzyme catalyses RNA(n) + a ribonucleoside 5'-triphosphate = RNA(n+1) + diphosphate. Functionally, DNA-dependent RNA polymerase catalyzes the transcription of DNA into RNA using the four ribonucleoside triphosphates as substrates. The polypeptide is DNA-directed RNA polymerase subunit beta' (Clostridium botulinum (strain Alaska E43 / Type E3)).